A 147-amino-acid chain; its full sequence is Hemoglobin subunit beta-A/B (147 aa).

Positions 2-147 (EWTDAERSAI…VVNALKRQYH (146 aa)) constitute a Globin domain. Heme b contacts are provided by histidine 63 and histidine 92.

The protein belongs to the globin family. Heterotetramer of two alpha chains and two beta chains. Red blood cells.

Involved in oxygen transport from gills to the various peripheral tissues. The sequence is that of Hemoglobin subunit beta-A/B from Cyprinus carpio (Common carp).